Consider the following 127-residue polypeptide: MAYVRLTSLAVLFFLAASVMKTEGGLPTCGETCTLGTCYVPDCSCSWPICMKNHIIAANAKTVNEHRLLCTSHEDCFKKGTGNYCASFPDSNIHFGWCFHAESEGYLLKDFMNMSKDDLKMPLESTN.

Positions 1–24 (MAYVRLTSLAVLFFLAASVMKTEG) are cleaved as a signal peptide. The cyclopeptide (Gly-Asn) cross-link spans 25 to 53 (GLPTCGETCTLGTCYVPDCSCSWPICMKN). Disulfide bonds link C29–C43, C33–C45, and C38–C50. A propeptide spans 54-127 (HIIAANAKTV…DLKMPLESTN (74 aa)) (removed in mature form).

Post-translationally, contains 3 disulfide bonds. This is a cyclic peptide. As to expression, expressed in flower, stem, shoot, leaf and seed but not in root, pod and nodule (at protein level).

Probably participates in a plant defense mechanism. Not active against Gram-negative bacteria E.coli ATCC 700926, K.pneumoniae ATTC 13883 and P.aeruginosa ATCC 39018 at concentration up to 100 uM. Has cytotoxic and hemolytic activity. The polypeptide is Cliotide T3 (Clitoria ternatea (Butterfly pea)).